The chain runs to 846 residues: Circadian locomoter output cycles protein kaput (846 aa).

The Nuclear localization signal signature appears at 32–47 (DKAKRVSRNKSEKKRR). Positions 34-84 (AKRVSRNKSEKKRRDQFNVLIKELGSMLPGNARKMDKSTVLQKSIDFLRKH) constitute a bHLH domain. Phosphoserine occurs at positions 38 and 42. Lysine 67 participates in a covalent cross-link: Glycyl lysine isopeptide (Lys-Gly) (interchain with G-Cter in SUMO1). 2 consecutive PAS domains span residues 107–177 (NEEF…LLES) and 262–332 (FIKE…MQYG). The PAC domain occupies 336 to 379 (SCYYRFLTKGQQWIWLQTHYYITYHQWNSRPEFIVCTHTVVSYA). Residues 371 to 845 (CTHTVVSYAE…SLPDPSKVQP (475 aa)) form an interaction with NR3C1 region. Disordered stretches follow at residues 392-411 (EESLPETAADKSQDSGSDNR) and 420-495 (ALER…SSLT). Serine 408 carries the phosphoserine modification. A Phosphoserine; by GSK3-beta modification is found at serine 427. Serine 431 carries the post-translational modification Phosphoserine. Residues 447-463 (DPSSTPTKIPTDTSTPP) are compositionally biased toward polar residues. Residues 450–570 (STPTKIPTDT…QGLQMFLQQS (121 aa)) form an interaction with SIRT1 region. Threonine 451 and threonine 461 each carry phosphothreonine; by CDK5. Residues 478 to 493 (SSFSSQSINSQSVGSS) show a composition bias toward low complexity. The implicated in the circadian rhythmicity stretch occupies residues 514 to 564 (FQFSAQLGAMQHLKDQLEQRTRMIEANIHRQQEELRKIQEQLQMVHGQGLQ). Low complexity-rich tracts occupy residues 624 to 637 (QQQTLQSTSTQSQQ) and 644 to 654 (SQQTSLPSQTQ). Disordered regions lie at residues 624-654 (QQQTLQSTSTQSQQNVLSGHSQQTSLPSQTQ), 764-783 (EQQLTSVQQPSQAQLTQPPQ), and 811-846 (STFPQSHHQQHQSQQQQQLSRHRTDSLPDPSKVQPQ). The span at 811–829 (STFPQSHHQQHQSQQQQQL) shows a compositional bias: low complexity. A Glycyl lysine isopeptide (Lys-Gly) (interchain with G-Cter in SUMO1) cross-link involves residue lysine 842.

Component of the circadian clock oscillator which includes the CRY proteins, CLOCK or NPAS2, BMAL1 or BMAL2, CSNK1D and/or CSNK1E, TIMELESS and the PER proteins. Interacts with KMT2A; in a circadian manner. Forms a heterodimer with BMAL1. The CLOCK-BMAL1 heterodimer is required for E-box-dependent transactivation, for CLOCK nuclear translocation and degradation, and for phosphorylation of both CLOCK and BMAL1. Interacts with NR3C1 in a ligand-dependent fashion. Interacts with ESR1 and estrogen stimulates this interaction. Interacts with the complex p35/CDK5. Interacts with RELA/p65. Interacts with KAT2B, CREBBP, EP300. Interacts with ID1 and ID3. Interacts with ID2. Interacts with MTA1. Interacts with OGA. Interacts with SIRT1. Interacts with CIPC. Interacts with EZH2. Interacts with EIF4E, PIWIL1 and DDX4. Interacts with PER2 and CRY1 and the interaction with PER and CRY proteins requires translocation to the nucleus. Interacts with PER1 and CRY2. Interaction of the CLOCK-BMAL1 heterodimer with PER or CRY inhibits transcription activation. Interaction of the CLOCK-BMAL1 with CRY1 is independent of DNA but with PER2 is off DNA. The CLOCK-BMAL1 heterodimer interacts with GSK3B. Interacts with KDM5A. Interacts with MYBBP1A. Interacts with THRAP3. Interacts with MED1; this interaction requires the presence of THRAP3. Interacts with NCOA2. The CLOCK-BMAL1 heterodimer interacts with PASD1. Interacts with ASS1 and IMPDH2; in a circadian manner. Interacts with NDUFA9. Interacts with PIWIL2 (via PIWI domain). Interacts with HNF4A. Ubiquitinated, leading to its proteasomal degradation. In terms of processing, O-glycosylated; contains O-GlcNAc. O-glycosylation by OGT prevents protein degradation by inhibiting ubiquitination. It also stabilizes the CLOCK-BMAL1 heterodimer thereby increasing CLOCK-BMAL1-mediated transcriptional activation of PER1/2/3 and CRY1/2. Post-translationally, phosphorylation is dependent on the CLOCK-BMAL1 heterodimer formation. Phosphorylation enhances the transcriptional activity, alters the subcellular localization and decreases the stability of the heterodimer by promoting its degradation. Phosphorylation shows circadian variations in the liver. May be phosphorylated by CSNK1D and CKSN1E. Sumoylation enhances its transcriptional activity and interaction with ESR1, resulting in up-regulation of ESR1 activity. Estrogen stimulates sumoylation. Desumoylation by SENP1 negatively regulates its transcriptional activity. Sumoylation stimulates cell proliferation and increases the proportion of S phase cells in breast cancer cell lines. In terms of processing, undergoes lysosome-mediated degradation in a time-dependent manner in the liver. As to expression, hair follicles (at protein level). Expressed in all tissues examined including spleen, thymus, prostate, testis, ovary, small intestine, colon, leukocytes, heart, brain, placenta, lung, liver, skeletal muscle, kidney and pancreas. Highest levels in testis and skeletal muscle. Low levels in thymus, lung and liver. Expressed in all brain regions with highest levels in cerebellum. Highly expressed in the suprachiasmatic nucleus (SCN).

Its subcellular location is the nucleus. The protein localises to the cytoplasm. The protein resides in the cytosol. It catalyses the reaction L-lysyl-[protein] + acetyl-CoA = N(6)-acetyl-L-lysyl-[protein] + CoA + H(+). With respect to regulation, there is conflicting data about the effect of NAD cofactors on activity. PubMed:11441146 suggests that the redox state of the cell can modulate the transcriptional activity of the CLOCK-BMAL1 heterodimer; NADH and NADPH enhance the DNA-binding activity of the heterodimer. PubMed:23229515 reports that NADH and NADPH have no significant effect on DNA-binding activity of the CLOCK-BMAL1 heterodimer. In terms of biological role, transcriptional activator which forms a core component of the circadian clock. The circadian clock, an internal time-keeping system, regulates various physiological processes through the generation of approximately 24 hour circadian rhythms in gene expression, which are translated into rhythms in metabolism and behavior. It is derived from the Latin roots 'circa' (about) and 'diem' (day) and acts as an important regulator of a wide array of physiological functions including metabolism, sleep, body temperature, blood pressure, endocrine, immune, cardiovascular, and renal function. Consists of two major components: the central clock, residing in the suprachiasmatic nucleus (SCN) of the brain, and the peripheral clocks that are present in nearly every tissue and organ system. Both the central and peripheral clocks can be reset by environmental cues, also known as Zeitgebers (German for 'timegivers'). The predominant Zeitgeber for the central clock is light, which is sensed by retina and signals directly to the SCN. The central clock entrains the peripheral clocks through neuronal and hormonal signals, body temperature and feeding-related cues, aligning all clocks with the external light/dark cycle. Circadian rhythms allow an organism to achieve temporal homeostasis with its environment at the molecular level by regulating gene expression to create a peak of protein expression once every 24 hours to control when a particular physiological process is most active with respect to the solar day. Transcription and translation of core clock components (CLOCK, NPAS2, BMAL1, BMAL2, PER1, PER2, PER3, CRY1 and CRY2) plays a critical role in rhythm generation, whereas delays imposed by post-translational modifications (PTMs) are important for determining the period (tau) of the rhythms (tau refers to the period of a rhythm and is the length, in time, of one complete cycle). A diurnal rhythm is synchronized with the day/night cycle, while the ultradian and infradian rhythms have a period shorter and longer than 24 hours, respectively. Disruptions in the circadian rhythms contribute to the pathology of cardiovascular diseases, cancer, metabolic syndromes and aging. A transcription/translation feedback loop (TTFL) forms the core of the molecular circadian clock mechanism. Transcription factors, CLOCK or NPAS2 and BMAL1 or BMAL2, form the positive limb of the feedback loop, act in the form of a heterodimer and activate the transcription of core clock genes and clock-controlled genes (involved in key metabolic processes), harboring E-box elements (5'-CACGTG-3') within their promoters. The core clock genes: PER1/2/3 and CRY1/2 which are transcriptional repressors form the negative limb of the feedback loop and interact with the CLOCK|NPAS2-BMAL1|BMAL2 heterodimer inhibiting its activity and thereby negatively regulating their own expression. This heterodimer also activates nuclear receptors NR1D1/2 and RORA/B/G, which form a second feedback loop and which activate and repress BMAL1 transcription, respectively. Regulates the circadian expression of ICAM1, VCAM1, CCL2, THPO and MPL and also acts as an enhancer of the transactivation potential of NF-kappaB. Plays an important role in the homeostatic regulation of sleep. The CLOCK-BMAL1 heterodimer regulates the circadian expression of SERPINE1/PAI1, VWF, B3, CCRN4L/NOC, NAMPT, DBP, MYOD1, PPARGC1A, PPARGC1B, SIRT1, GYS2, F7, NGFR, GNRHR, BHLHE40/DEC1, ATF4, MTA1, KLF10 and also genes implicated in glucose and lipid metabolism. Promotes rhythmic chromatin opening, regulating the DNA accessibility of other transcription factors. The CLOCK-BMAL2 heterodimer activates the transcription of SERPINE1/PAI1 and BHLHE40/DEC1. The preferred binding motif for the CLOCK-BMAL1 heterodimer is 5'-CACGTGA-3', which contains a flanking adenine nucleotide at the 3-prime end of the canonical 6-nucleotide E-box sequence. CLOCK specifically binds to the half-site 5'-CAC-3', while BMAL1 binds to the half-site 5'-GTGA-3'. The CLOCK-BMAL1 heterodimer also recognizes the non-canonical E-box motifs 5'-AACGTGA-3' and 5'-CATGTGA-3'. CLOCK has an intrinsic acetyltransferase activity, which enables circadian chromatin remodeling by acetylating histones and nonhistone proteins, including its own partner BMAL1. Represses glucocorticoid receptor NR3C1/GR-induced transcriptional activity by reducing the association of NR3C1/GR to glucocorticoid response elements (GREs) via the acetylation of multiple lysine residues located in its hinge region. The acetyltransferase activity of CLOCK is as important as its transcription activity in circadian control. Acetylates metabolic enzymes IMPDH2 and NDUFA9 in a circadian manner. Facilitated by BMAL1, rhythmically interacts and acetylates argininosuccinate synthase 1 (ASS1) leading to enzymatic inhibition of ASS1 as well as the circadian oscillation of arginine biosynthesis and subsequent ureagenesis. Drives the circadian rhythm of blood pressure through transcriptional activation of ATP1B1. The protein is Circadian locomoter output cycles protein kaput (CLOCK) of Homo sapiens (Human).